The primary structure comprises 337 residues: MRLYELSFDEVERFFYKLAELRDTVKDSGLMSYVPELVSLTGQVQGTTRVKHAFPIFQKGGVVMDVTSVEQAGIAEEAGAVSVMVLDKLPYDVRKAGGVARMADPKIIEEVMNSITIPVMAKVRIGHYYEAKVLEALGVDMIDESEVLTPADEEHHINKWEFKIPFVNGARNLGEGLRRISEGASMIRTKGEPGTGNVSEAVKHIKIVNQELRALLSMAEEDRVKKSRELQVPYELVELTVKYARLPVVNFAAGGIATPADAALMMWLGTDGIFVGSGIFKSEDPLERAKAIVLATAGWEDPEIVLEAQKMISEHKAMMGIDIKTLKPEELMQVRGA.

Aspartate 65 contacts D-ribose 5-phosphate. The active-site Schiff-base intermediate with D-ribose 5-phosphate is the lysine 122. Glycine 194 serves as a coordination point for D-ribose 5-phosphate. Lysine 206 is a binding site for D-glyceraldehyde 3-phosphate. D-ribose 5-phosphate-binding positions include glycine 255 and 276-277 (GS).

It belongs to the PdxS/SNZ family. In terms of assembly, in the presence of PdxT, forms a dodecamer of heterodimers.

The enzyme catalyses aldehydo-D-ribose 5-phosphate + D-glyceraldehyde 3-phosphate + L-glutamine = pyridoxal 5'-phosphate + L-glutamate + phosphate + 3 H2O + H(+). It participates in cofactor biosynthesis; pyridoxal 5'-phosphate biosynthesis. Catalyzes the formation of pyridoxal 5'-phosphate from ribose 5-phosphate (RBP), glyceraldehyde 3-phosphate (G3P) and ammonia. The ammonia is provided by the PdxT subunit. Can also use ribulose 5-phosphate and dihydroxyacetone phosphate as substrates, resulting from enzyme-catalyzed isomerization of RBP and G3P, respectively. This Metallosphaera sedula (strain ATCC 51363 / DSM 5348 / JCM 9185 / NBRC 15509 / TH2) protein is Pyridoxal 5'-phosphate synthase subunit PdxS.